Consider the following 904-residue polypeptide: Disks large homolog 1 (904 aa).

The 61-residue stretch at 4 to 64 folds into the L27 domain; it reads RKQDTQRALH…FYEVTLLDNP (61 aa). Residue T115 is modified to Phosphothreonine. 3 positions are modified to phosphoserine: S122, S138, and S158. Residues 162–212 are interaction with SH3 domains; sequence PTEAVLPSPPTVPVIPVLPVPAENTVILPTIPQANPPPVLVNTDSLETPTY. PDZ domains lie at 224–310, 319–405, and 466–546; these read EITL…VKRR, EIKL…VAKP, and KVVL…AQYR. Residues 224–546 are required for interaction with MARCHF2; that stretch reads EITLERGNSG…QAVTIVAQYR (323 aa). S232 carries the phosphoserine modification. Y399 carries the phosphotyrosine modification. A phosphoserine mark is found at S568, S573, S575, S579, S598, S619, S676, S684, S687, Q709, and S834. One can recognise an SH3 domain in the interval 581 to 651; the sequence is KRSLYVRALF…PSKRRVEKKE (71 aa). Positions 662-693 are disordered; sequence SKTRDKGEIPDDMGSKGLKHVTSNASDSESSY. Residues 682-693 are compositionally biased toward polar residues; that stretch reads VTSNASDSESSY. The Guanylate kinase-like domain maps to 714–889; that stretch reads TRPVIILGPM…IYNQVKQIIE (176 aa).

The protein belongs to the MAGUK family. In terms of assembly, homotetramer. Interacts (via guanylate kinase-like domain) with DLGAP1, DLGAP2, DLGAP3, DLGAP4 and MAP1A. Interacts (via guanylate kinase-like domain) with KIF13B. May interact with HTR2A. Interacts (via PDZ domains) with GRIA1. Interacts (via PDZ domains) with GRIN2A. Interacts (via PDZ domains) with KCND2 and KCND3. Interacts (via PDZ domains) with KCNA1, KCNA2, KCNA3 and KCNA4. Interacts (via PDZ domains) with ADGRA3. Interacts with KCNF1. Interacts with CAMK2. Interacts with cytoskeleton-associated protein EPB41. Interacts with cytoskeleton-associated protein EZR. Found in a complex with KCNA5 and CAV3. Found in a complex with APC and CTNNB1. Interacts (via PDZ domains) with APC. Interacts with CDH1 through binding to PIK3R1. Forms multiprotein complexes with CASK, LIN7A, LIN7B, LIN7C, APBA1, and KCNJ12. Interacts with TOPK. Forms a tripartite complex composed of DLG1, MPP7 and LIN7 (LIN7A or LIN7C). May interact with TJAP1. Interacts with PTEN. Interacts with FRMPD4 (via C-terminus). Interacts with LRFN1, LRFN2 and LRFN4. Interacts with SFPQ. Interacts (via PDZ domains) with ADGRA2 (via PDZ-binding motif). Interacts with ADAM10; this interaction recruits ADAM10 to the cell membrane during long-term depression in hippocampal neurons. Interacts with DGKI (via PDZ-binding motif). Interacts (via PDZ domains) with MARCHF2 (via PDZ domain); the interaction leads to DLG1 ubiqtuitination and degradation. Interacts (via N-terminus) with MPP3; this interaction connects CADM1 with DLG1 and links CADM1 with the regulatory subunit of phosphoinositide-3-kinase (PI3K) by forming a multiprotein complex and participates in cell spreading. As to quaternary structure, (Microbial infection) Interacts with HTLV-1 protein Tax. (Microbial infection) Interacts (via PDZ domains 1 and 2) with influenza A virus protein NS1; the interaction results in the translocation of DLG1 from the cell membrane to perinuclear puncta. Acts as a scaffold protein to facilitate the interaction between LIN7C and influenza A virus protein NS1; the interaction facilitates translocation of LIN7C to cytoplasmic puncta. In terms of assembly, (Microbial infection) Interacts with human papillomavirus 18/HPV-18 protein E6. Post-translationally, phosphorylated by MAPK12. Phosphorylation of Ser-232 regulates association with GRIN2A. In terms of processing, ubiquitinated; by MARCHF2 which results in its degradation. In terms of tissue distribution, abundantly expressed in atrial myocardium (at protein level). Expressed in lung fibroblasts, cervical epithelial and B-cells (at protein level). Expressed in the brain (at protein level). Widely expressed, with isoforms displaying different expression profiles.

It is found in the cell membrane. The protein localises to the basolateral cell membrane. The protein resides in the endoplasmic reticulum membrane. It localises to the postsynaptic density. Its subcellular location is the synapse. It is found in the sarcolemma. The protein localises to the apical cell membrane. The protein resides in the cell junction. It localises to the cytoplasm. Functionally, essential multidomain scaffolding protein required for normal development. Recruits channels, receptors and signaling molecules to discrete plasma membrane domains in polarized cells. Promotes epithelial cell layer barrier function via maintaining cell-cell adhesion. May also play a role in adherens junction assembly, signal transduction, cell proliferation, synaptogenesis and lymphocyte activation. Regulates the excitability of cardiac myocytes by modulating the functional expression of Kv4 channels. Functional regulator of Kv1.5 channel. During long-term depression in hippocampal neurons, it recruits ADAM10 to the plasma membrane. The sequence is that of Disks large homolog 1 from Homo sapiens (Human).